The following is a 1183-amino-acid chain: Spermatogenesis-associated protein 31G1 (1183 aa).

6 disordered regions span residues 109 to 153 (TPIG…FPTF), 469 to 555 (LMPA…SPWA), 661 to 686 (TVDD…SSEP), 843 to 884 (ASQG…VSEV), 973 to 1032 (CLHS…TGLL), and 1048 to 1087 (QKRG…PAEA). Basic and acidic residues predominate over residues 124-134 (CRSEGRPRATE). Residues 135–153 (TQEQVLIQSPSPSRSFPTF) show a composition bias toward polar residues. A compositionally biased stretch (basic and acidic residues) spans 487–509 (NPKERLSAPKDVRENLGYREHPH). Residues 671–685 (TGKNTDNTKKCSSSE) show a composition bias toward polar residues. The span at 847–858 (PNPPAVNPPQPT) shows a compositional bias: pro residues. A compositionally biased stretch (polar residues) spans 975–984 (HSSSQPQAQA). The span at 993–1002 (QKSKRLKRKA) shows a compositional bias: basic residues. The span at 1069 to 1079 (SPTNTRENNPA) shows a compositional bias: polar residues.

As to expression, expressed in kidney and testis. Expressed at lower levels in stomach, intestine, epididymis and ovary. Expressed at very low levels in heart and spleen.

In terms of biological role, dispensable for normal development and fertility. The chain is Spermatogenesis-associated protein 31G1 (Spata31g1) from Mus musculus (Mouse).